We begin with the raw amino-acid sequence, 596 residues long: Sensor protein ChvG (596 aa).

The segment at 1-22 (MLKKTPETVSDSDDAEERGSER) is disordered. At 1 to 47 (MLKKTPETVSDSDDAEERGSERRHRIHPLTIIRRIFGNAVFSSLTRR) the chain is on the cytoplasmic side. Residues 48–68 (ILFFNVAATVVLVGGILYLNQ) form a helical membrane-spanning segment. The Periplasmic segment spans residues 69–283 (FREGLIDARV…VHAERLAIMR (215 aa)). A helical transmembrane segment spans residues 284 to 304 (VFGIATLVNIVLSLLLSSTIA). The 56-residue stretch at 301–356 (STIATPLRRLSAAAIRVRRGARTREEIPDFSARQDEIGNLSIALREMTTALYDRID) folds into the HAMP domain. The Cytoplasmic portion of the chain corresponds to 305–596 (TPLRRLSAAA…SLPAAETHER (292 aa)). Residues 364–592 (DVSHELKNPL…RFTLSLPAAE (229 aa)) form the Histidine kinase domain. Position 367 is a phosphohistidine (His367).

It localises to the cell inner membrane. The enzyme catalyses ATP + protein L-histidine = ADP + protein N-phospho-L-histidine.. Its function is as follows. Member of a two-component regulatory system ChvG/ChvI. Activates ChvI by phosphorylation (Potential). The polypeptide is Sensor protein ChvG (chvG) (Agrobacterium fabrum (strain C58 / ATCC 33970) (Agrobacterium tumefaciens (strain C58))).